Reading from the N-terminus, the 288-residue chain is Aquaporin PIP2-4 (288 aa).

The segment at Met-1–Pro-24 is disordered. Helical transmembrane passes span Ala-42–Ile-62 and Cys-79–Val-99. The NPA 1 motif lies at Asn-111–Ala-113. Transmembrane regions (helical) follow at residues Leu-130 to Phe-150, Gly-172 to Ala-192, and Val-206 to Ile-226. The short motif at Asn-232–Ala-234 is the NPA 2 element. A helical membrane pass occupies residues Ile-254–Leu-274.

The protein belongs to the MIP/aquaporin (TC 1.A.8) family. PIP (TC 1.A.8.11) subfamily. As to quaternary structure, homomers. May interact with PIP1-2 to form heteromers. As to expression, expressed in the root growing zone at 5-6 mm from the root tip.

It is found in the cell membrane. Functionally, water channel required to facilitate the transport of water across cell membrane. Active as homomers. Increased activity when heteromerization with PIP1-2. The polypeptide is Aquaporin PIP2-4 (PIP2-4) (Zea mays (Maize)).